A 478-amino-acid polypeptide reads, in one-letter code: Flotillin-like protein 1 (478 aa).

Cys35 carries the S-palmitoyl cysteine lipid modification. A coiled-coil region spans residues 235–277 (ENQREAEVAEANSELAKKKAAWTMAAQVAELEAAKAVALREAE).

Belongs to the band 7/mec-2 family. Flotillin subfamily. Post-translationally, may be palmitoylated. In terms of tissue distribution, expressed in all plant organs. Primarily expressed in vascular tissues. No change in spatial expression in root upon inoculation. Expression limited to the nodule vascular tissue.

Its subcellular location is the cell membrane. The protein localises to the membrane. The protein resides in the caveola. May act as a scaffolding protein within caveolar membranes, functionally participating in formation of caveolae or caveolae-like vesicles. May be involved in nodule formation. The chain is Flotillin-like protein 1 (FLOT1) from Medicago truncatula (Barrel medic).